The primary structure comprises 229 residues: uncharacterized protein (229 aa).

This is an uncharacterized protein from Borreliella burgdorferi (strain ATCC 35210 / DSM 4680 / CIP 102532 / B31) (Borrelia burgdorferi).